The chain runs to 619 residues: Replication restart protein PriA (619 aa).

The region spanning 119–285 (LKELQKHSAS…KDKALVRLKG (167 aa)) is the Helicase ATP-binding domain. ATP is bound at residue 132 to 139 (GDTGSGKT). The DEAH box signature appears at 228–231 (DEEH). Zn(2+)-binding residues include Cys-336, Cys-339, Cys-345, Cys-348, Cys-363, Cys-366, Cys-376, and Cys-379. Positions 371 to 532 (PIPKICSACQ…ELYPPFSRLC (162 aa)) constitute a Helicase C-terminal domain.

This sequence belongs to the helicase family. PriA subfamily. As to quaternary structure, component of the replication restart primosome. Zn(2+) serves as cofactor.

It carries out the reaction Couples ATP hydrolysis with the unwinding of duplex DNA by translocating in the 3'-5' direction.. The enzyme catalyses ATP + H2O = ADP + phosphate + H(+). Functionally, initiates the restart of stalled replication forks, which reloads the replicative helicase on sites other than the origin of replication. Recognizes and binds to abandoned replication forks and remodels them to uncover a helicase loading site. Promotes assembly of the primosome at these replication forks. Its function is as follows. Important for survival of the bacteria in host cells. In Helicobacter pylori (strain ATCC 700392 / 26695) (Campylobacter pylori), this protein is Replication restart protein PriA.